Reading from the N-terminus, the 158-residue chain is Large ribosomal subunit protein eL20z (158 aa).

The protein belongs to the eukaryotic ribosomal protein eL20 family.

The chain is Large ribosomal subunit protein eL20z (RPL18A1) from Arabidopsis thaliana (Mouse-ear cress).